Here is a 234-residue protein sequence, read N- to C-terminus: Synaptogyrin-4 (234 aa).

An MARVEL domain is found at 18-169 (FLKRPKAITR…QAYLAFQELR (152 aa)). Helical transmembrane passes span 25–45 (ITRIFAGVFSLIVFSSLLTDG), 66–86 (CSIAVGAGLLAFLSSLAFLAL), 104–124 (LLDLILAVIWAGVWAVGFCFL), and 145–165 (AAITFSFFSILVWIFQAYLAF). The tract at residues 191-226 (SPPSAASPVNTPTTGPHGPSYASSSLSPYLSTPKAP) is disordered. Over residues 209-221 (PSYASSSLSPYLS) the composition is skewed to low complexity.

It belongs to the synaptogyrin family.

Its subcellular location is the membrane. The sequence is that of Synaptogyrin-4 (SYNGR4) from Bos taurus (Bovine).